Here is a 1104-residue protein sequence, read N- to C-terminus: Protein KIBRA (1104 aa).

2 consecutive WW domains span residues 6–39 (LPLP…DPRD) and 53–86 (DELP…DPRV). A coiled-coil region spans residues 107-193 (LSAQKEIYQV…ELQFKERGFQ (87 aa)). S141 is subject to Phosphoserine. Disordered stretches follow at residues 429 to 449 (SMQS…RGSL) and 509 to 547 (TQKA…SPPC). Low complexity predominate over residues 527 to 542 (TPRSMTSLSPRSSLSS). S535 is subject to Phosphoserine. S542 is subject to Phosphoserine; by CDK1. A C2 domain is found at 659–782 (GATRVQIALK…RSGERSTRWY (124 aa)). The segment at 822 to 949 (LEKRQEGRSS…DSSTLSKKPP (128 aa)) is disordered. The interval 836-1104 (EGSWTYEEEA…NIPALSADDV (269 aa)) is interaction with histone H3. The segment covering 841 to 862 (YEEEASENEAVAEEEEEGEEDV) has biased composition (acidic residues). A phosphoserine mark is found at S887, S891, and S919. The span at 916-930 (IIRSKTFSPGPQSQY) shows a compositional bias: polar residues. T921 bears the Phosphothreonine mark. A Phosphoserine; by CDK1 modification is found at S923. S939 carries the phosphoserine modification. Interaction with PRKCZ stretches follow at residues 945–988 (SKKP…LDLQ) and 948–967 (PPFV…RPSS). 2 positions are modified to phosphoserine; by PKC/PRKCZ: S967 and S970. Positions 994–1024 (HSQLTQEISVLKELKEHLEQAKNHGEKELPQ) form a coiled coil. Positions 1102-1104 (DDV) match the ADDV motif motif.

Belongs to the WWC family. KIBRA subfamily. Homodimer. Forms heterodimers with WWC2 and WWC3. Interacts with DDN. Interacts with DYNLL1 and histone H3. The interaction with DYNLL1 is mandatory for the recruitment and transactivation functions of ESR1 or DYNLL1 to the target chromatin and the interaction with histone H3 ensures proper regulatory interaction of WWC1-DYNLL1-ESR1 complexes with target chromatin. Interacts (via WW domains) with DDR1 (via PPxY motif) in a collagen-regulated manner. Interacts with PRKCZ (via the protein kinase domain). Forms a tripartite complex with DDR1 and PRKCZ, but predominantly in the absence of collagen. Interacts (via the ADDV motif) with PATJ (via PDZ domain 8). Interacts (via WW domains) with SYNPO (via PPxY motifs). Interacts with NF2 and SNX4. Interacts with CCDC141; retains AMPAR in the cytosol after internalization. Interacts with DLC1 and PRKCZ. Interacts (via WW domains) with LATS1 and LATS2. Phosphorylation at Ser-542 and Ser-923 by CDK1 in response to spindle damage stress regulates mitotic exit, these two sites are dephosphorylated by CDC14B. As to expression, mammary epithelium.

The protein localises to the cytoplasm. The protein resides in the perinuclear region. It is found in the nucleus. It localises to the cell projection. Its subcellular location is the ruffle membrane. The protein localises to the cytosol. Its function is as follows. Regulator of the Hippo signaling pathway, also known as the Salvador-Warts-Hippo (SWH) pathway. Enhances phosphorylation of LATS1 and YAP1 and negatively regulates cell proliferation and organ growth due to a suppression of the transcriptional activity of YAP1, the major effector of the Hippo pathway. Along with NF2 can synergistically induce the phosphorylation of LATS1 and LATS2 and function in the regulation of Hippo signaling pathway. Acts as a transcriptional coactivator of ESR1 which plays an essential role in DYNLL1-mediated ESR1 transactivation. Modulates directional migration of podocytes. May be associated with memory performance. Regulates collagen-stimulated activation of the ERK/MAPK cascade. Plays an important role in regulating AMPA-selective glutamate receptors (AMPARs) trafficking. This is Protein KIBRA (Wwc1) from Mus musculus (Mouse).